The following is a 333-amino-acid chain: Gamma-D-glutamyl-L-lysine dipeptidyl-peptidase (333 aa).

The N-terminal stretch at 1–23 (MKKVGTAFLTTLFIFSSFTSAHA) is a signal peptide. Residues Glu-83, Tyr-118, 237-239 (DCS), and 256-257 (DS) contribute to the substrate site. Residues 208 to 332 (TPAADDLINT…EEYAGARRYL (125 aa)) enclose the NlpC/P60 domain. Cys-238 functions as the Nucleophile in the catalytic mechanism. The active-site Proton acceptor is His-291. The active site involves His-303.

Belongs to the peptidase C40 family. Monomer in solution.

The catalysed reaction is The enzyme releases L-Ala-gamma-D-Glu dipeptides from cell wall peptides via cleavage of an L-Ala-gamma-D-Glu-|-L-Lys bond.. The protein operates within cell wall degradation; peptidoglycan degradation. Its function is as follows. Specifically hydrolyzes gamma-D-glutamyl-L-lysine bonds in murein peptides, releasing L-Ala-D-Glu. The chain is Gamma-D-glutamyl-L-lysine dipeptidyl-peptidase from Bacillus cereus (strain ATCC 10987 / NRS 248).